Reading from the N-terminus, the 837-residue chain is Enterin neuropeptides (837 aa).

An N-terminal signal peptide occupies residues 1–25 (MAKHDVTVMTLLLVVCALHVFDAQG). A propeptide spanning residues 26–47 (TDVKLNDGFLRSGIMNIPFQRR) is cleaved from the precursor. Valine 57 is subject to Valine amide. Residues 61–134 (SGFQSPVSPS…ENKRFSKENE (74 aa)) constitute a propeptide that is removed on maturation. At valine 146 the chain carries Valine amide. A propeptide spanning residues 150 to 178 (MDLSALEKELIAKLKAADLLSPLETEAPG) is cleaved from the precursor. A Leucine amide modification is found at leucine 190. A propeptide spanning residues 194 to 201 (MPVDVFPR) is cleaved from the precursor. Position 211 is a valine amide (valine 211). Residues 215–234 (SGNGENYFDDLDTFGDISQR) constitute a propeptide that is removed on maturation. Valine 244 is modified (valine amide). Positions 248–266 (GNTDFSRNPLARLSQVQNR) are excised as a propeptide. Valine 276 carries the post-translational modification Valine amide. Residues 280 to 285 (SVHNIV) constitute a propeptide that is removed on maturation. Valine 297 carries the valine amide modification. The propeptide occupies 301–325 (DFEDASEGLDEEEGDIDGYSDDLDV). Valine amide occurs at positions 336, 348, 360, 372, 384, 396, 408, 420, 432, 444, 456, 468, 480, 492, 504, 516, 528, and 540. A propeptide spanning residues 544-595 (ELGEDEINFLKEVDAADISRQLAEEDEKEAMVSVDDKETLSNEEDASEDDFE) is cleaved from the precursor. A disordered region spans residues 567 to 594 (EEDEKEAMVSVDDKETLSNEEDASEDDF). Residues 584–593 (SNEEDASEDD) show a composition bias toward acidic residues. Glutamate 598 carries the post-translational modification Pyrrolidone carboxylic acid (Glu); in form ENl'. Valine 606 is subject to Valine amide. A propeptide spanning residues 610-627 (DEEGDMGVEMEEEMESEK) is cleaved from the precursor. Leucine 637 carries the post-translational modification Leucine amide. Position 641 is a pyrrolidone carboxylic acid (glutamine 641). Valine 649 carries the post-translational modification Valine amide. At glutamine 653 the chain carries Pyrrolidone carboxylic acid. A valine amide mark is found at valine 661 and valine 673. Residue glutamine 677 is modified to Pyrrolidone carboxylic acid. A valine amide mark is found at valine 685 and valine 697. A Pyrrolidone carboxylic acid modification is found at glutamine 701. Valine 709 bears the Valine amide mark. Glutamine 713 is subject to Pyrrolidone carboxylic acid. The residue at position 721 (valine 721) is a Valine amide. The residue at position 725 (glutamine 725) is a Pyrrolidone carboxylic acid. Valine 733 is modified (valine amide). Positions 734-837 (GKRSGAEDID…DSHIMATSST (104 aa)) are excised as a propeptide. The tract at residues 772–837 (GQPAAANEEE…DSHIMATSST (66 aa)) is disordered. A compositionally biased stretch (acidic residues) spans 778–791 (NEEELQQEAAEESE).

High expression in gut and CNS.

The protein localises to the secreted. Its function is as follows. Reduce interneurons B4/5 activity. May play a regulatory role in nonfeeding behaviors. This is Enterin neuropeptides (ENPP) from Aplysia californica (California sea hare).